We begin with the raw amino-acid sequence, 111 residues long: NADH-ubiquinone oxidoreductase chain 3 (111 aa).

3 helical membrane-spanning segments follow: residues Met1–Gly21, Phe56–Ile76, and Leu84–Tyr104.

This sequence belongs to the complex I subunit 3 family.

It is found in the mitochondrion membrane. It carries out the reaction a ubiquinone + NADH + 5 H(+)(in) = a ubiquinol + NAD(+) + 4 H(+)(out). Core subunit of the mitochondrial membrane respiratory chain NADH dehydrogenase (Complex I) that is believed to belong to the minimal assembly required for catalysis. Complex I functions in the transfer of electrons from NADH to the respiratory chain. The immediate electron acceptor for the enzyme is believed to be ubiquinone. The polypeptide is NADH-ubiquinone oxidoreductase chain 3 (ND3) (Ascaris suum (Pig roundworm)).